Consider the following 272-residue polypeptide: Digeranylgeranylglyceryl phosphate synthase (272 aa).

The next 8 membrane-spanning stretches (helical) occupy residues 16–36 (AFIA…EIIL), 79–99 (ALYY…IISL), 100–120 (ENGI…YDLK), 124–144 (FIGN…GGLI), 148–168 (VNLG…REII), 194–214 (AVML…LLYY), 217–237 (IFSI…VYSA), and 252–272 (ISKY…MGAL).

This sequence belongs to the UbiA prenyltransferase family. DGGGP synthase subfamily. Requires Mg(2+) as cofactor.

The protein resides in the cell membrane. It carries out the reaction sn-3-O-(geranylgeranyl)glycerol 1-phosphate + (2E,6E,10E)-geranylgeranyl diphosphate = 2,3-bis-O-(geranylgeranyl)-sn-glycerol 1-phosphate + diphosphate. The protein operates within membrane lipid metabolism; glycerophospholipid metabolism. In terms of biological role, prenyltransferase that catalyzes the transfer of the geranylgeranyl moiety of geranylgeranyl diphosphate (GGPP) to the C2 hydroxyl of (S)-3-O-geranylgeranylglyceryl phosphate (GGGP). This reaction is the second ether-bond-formation step in the biosynthesis of archaeal membrane lipids. This chain is Digeranylgeranylglyceryl phosphate synthase, found in Methanosphaera stadtmanae (strain ATCC 43021 / DSM 3091 / JCM 11832 / MCB-3).